Consider the following 369-residue polypeptide: Anhydro-N-acetylmuramic acid kinase (369 aa).

12–19 (GTSLDGVD) is a binding site for ATP.

It belongs to the anhydro-N-acetylmuramic acid kinase family.

The catalysed reaction is 1,6-anhydro-N-acetyl-beta-muramate + ATP + H2O = N-acetyl-D-muramate 6-phosphate + ADP + H(+). The protein operates within amino-sugar metabolism; 1,6-anhydro-N-acetylmuramate degradation. It functions in the pathway cell wall biogenesis; peptidoglycan recycling. Its function is as follows. Catalyzes the specific phosphorylation of 1,6-anhydro-N-acetylmuramic acid (anhMurNAc) with the simultaneous cleavage of the 1,6-anhydro ring, generating MurNAc-6-P. Is required for the utilization of anhMurNAc either imported from the medium or derived from its own cell wall murein, and thus plays a role in cell wall recycling. In Escherichia coli O45:K1 (strain S88 / ExPEC), this protein is Anhydro-N-acetylmuramic acid kinase.